The sequence spans 375 residues: Growth/differentiation factor 8 (375 aa).

The signal sequence occupies residues 1–23 (MQKLQIFVYIYLFMLLVAGPVDL). Positions 24–266 (NENSEQKENV…VTDTPKRSRR (243 aa)) are excised as a propeptide. N-linked (GlcNAc...) asparagine glycosylation is found at Asn-48 and Asn-71. 4 disulfides stabilise this stretch: Cys-272-Cys-282, Cys-281-Cys-340, Cys-309-Cys-372, and Cys-313-Cys-374.

It belongs to the TGF-beta family. In terms of assembly, homodimer; disulfide-linked. Interacts with WFIKKN2, leading to inhibit its activity. Interacts with FSTL3. Post-translationally, synthesized as large precursor molecule that undergoes proteolytic cleavage to generate an N-terminal propeptide and a disulfide linked C-terminal dimer, which is the biologically active molecule. The circulating form consists of a latent complex of the C-terminal dimer and other proteins, including its propeptide, which maintain the C-terminal dimer in a latent, inactive state. Ligand activation requires additional cleavage of the prodomain by a tolloid-like metalloproteinase.

It is found in the secreted. In terms of biological role, acts specifically as a negative regulator of skeletal muscle growth. The polypeptide is Growth/differentiation factor 8 (MSTN) (Ovis aries (Sheep)).